A 685-amino-acid polypeptide reads, in one-letter code: Protein OCTOPUS (685 aa).

Disordered stretches follow at residues 1–34 (MNPATDPVSAAAAALAPPPQPPQPHRLSTSCNRH), 152–202 (RNLP…DYVE), and 280–314 (KWRQNQKMKKRRNGGDHRPGSARLPVEKPIGRQLR). Over residues 179-202 (VNDEGEAESDDEELEEEEEEDYVE) the composition is skewed to acidic residues. Residues 280-291 (KWRQNQKMKKRR) show a composition bias toward basic residues. Basic and acidic residues predominate over residues 292–314 (NGGDHRPGSARLPVEKPIGRQLR). A Phosphoserine modification is found at serine 318. Positions 419–471 (VEEPAPPPPVVNQTNGVSDPVIIPGGSIQTRDYYTDSSSRRRKSLDRSSSSMR) are disordered. The stretch at 549–578 (LIYRKSVNKYEEEEEEEEDRYRRLNGGMVE) forms a coiled coil. Positions 584 to 640 (SWPELRNGGGGGGGPRMVRSNSNVSWRSSGGGSARKVNGLDRRNKSSRYSPKNGENG) are disordered. Positions 601–611 (VRSNSNVSWRS) are enriched in low complexity.

The protein belongs to the OCTOPUS family. As to quaternary structure, interacts with VCC. Post-translationally, phosphorylation at Ser-318 amplifies the promotion of protophloem differentiation. As to expression, expressed in provascular cells and phloem initials (e.g. protophloem, metaphloem, sieve element precursor cells and sieve element procambium precursor cells).

It is found in the cell membrane. Its subcellular location is the cytoplasm. Functionally, potentiates primary root protophloem differentiation. Required, together with VCC, for embryo provasculature development and cotyledon vascular complexity and connectivity. Regulates roots architecture. Mediates the recruitment of ASK7/BIN2 to the plasma membrane. The chain is Protein OCTOPUS from Arabidopsis thaliana (Mouse-ear cress).